A 190-amino-acid polypeptide reads, in one-letter code: Protein GrpE (190 aa).

A compositionally biased stretch (basic and acidic residues) spans 1–10; the sequence is MKKHVTEEQK. Positions 1–42 are disordered; the sequence is MKKHVTEEQKTSAAPEAEQASPESSAAEAATPEERISRLEEQ. Over residues 12–30 the composition is skewed to low complexity; it reads SAAPEAEQASPESSAAEAA. Over residues 32 to 42 the composition is skewed to basic and acidic residues; sequence PEERISRLEEQ.

This sequence belongs to the GrpE family. Homodimer.

It localises to the cytoplasm. In terms of biological role, participates actively in the response to hyperosmotic and heat shock by preventing the aggregation of stress-denatured proteins, in association with DnaK and GrpE. It is the nucleotide exchange factor for DnaK and may function as a thermosensor. Unfolded proteins bind initially to DnaJ; upon interaction with the DnaJ-bound protein, DnaK hydrolyzes its bound ATP, resulting in the formation of a stable complex. GrpE releases ADP from DnaK; ATP binding to DnaK triggers the release of the substrate protein, thus completing the reaction cycle. Several rounds of ATP-dependent interactions between DnaJ, DnaK and GrpE are required for fully efficient folding. This Pelobacter propionicus (strain DSM 2379 / NBRC 103807 / OttBd1) protein is Protein GrpE.